We begin with the raw amino-acid sequence, 100 residues long: Small ribosomal subunit protein uS14c (100 aa).

This sequence belongs to the universal ribosomal protein uS14 family. As to quaternary structure, part of the 30S ribosomal subunit.

It is found in the plastid. It localises to the chloroplast. In terms of biological role, binds 16S rRNA, required for the assembly of 30S particles. This is Small ribosomal subunit protein uS14c from Tetradesmus obliquus (Green alga).